A 290-amino-acid polypeptide reads, in one-letter code: Bifunctional protein FolD (290 aa).

NADP(+)-binding positions include 174-176, Ile199, and Ile240; that span reads GHS.

Belongs to the tetrahydrofolate dehydrogenase/cyclohydrolase family. As to quaternary structure, homodimer.

The enzyme catalyses (6R)-5,10-methylene-5,6,7,8-tetrahydrofolate + NADP(+) = (6R)-5,10-methenyltetrahydrofolate + NADPH. It carries out the reaction (6R)-5,10-methenyltetrahydrofolate + H2O = (6R)-10-formyltetrahydrofolate + H(+). Its pathway is one-carbon metabolism; tetrahydrofolate interconversion. Functionally, catalyzes the oxidation of 5,10-methylenetetrahydrofolate to 5,10-methenyltetrahydrofolate and then the hydrolysis of 5,10-methenyltetrahydrofolate to 10-formyltetrahydrofolate. This Methanosarcina acetivorans (strain ATCC 35395 / DSM 2834 / JCM 12185 / C2A) protein is Bifunctional protein FolD.